A 142-amino-acid chain; its full sequence is Small ribosomal subunit protein uS8c (142 aa).

Belongs to the universal ribosomal protein uS8 family. As to quaternary structure, part of the 30S ribosomal subunit.

It localises to the plastid. One of the primary rRNA binding proteins, it binds directly to 16S rRNA central domain where it helps coordinate assembly of the platform of the 30S subunit. The chain is Small ribosomal subunit protein uS8c (rps8) from Euglena longa (Euglenophycean alga).